A 435-amino-acid chain; its full sequence is Transcription activator AKTR-2 (435 aa).

Residues cysteine 16–cysteine 43 constitute a DNA-binding region (zn(2)-C6 fungal-type). Residues arginine 49 to leucine 103 are disordered. Residues arginine 50 to arginine 59 show a composition bias toward basic residues.

Its subcellular location is the nucleus. In terms of biological role, transcription factor that regulates the expression of the gene clusters that mediate the biosynthesis of the host-selective toxins (HSTs) AK-toxins responsible for Japanese pear black spot disease by the Japanese pear pathotype. AK-toxins are esters of 9,10-epoxy 8-hydroxy 9-methyldecatrienoic acid (EDA). On cellular level, AK-toxins affect plasma membrane of susceptible cells and cause a sudden increase in loss of K(+) after a few minutes of toxin treatment. The protein is Transcription activator AKTR-2 of Alternaria alternata (Alternaria rot fungus).